A 153-amino-acid polypeptide reads, in one-letter code: Ribonuclease H (153 aa).

Positions 4-145 (SVDSVELFTD…ADQLANRGVD (142 aa)) constitute an RNase H type-1 domain. 4 residues coordinate Mg(2+): Asp-13, Glu-51, Asp-73, and Asp-137.

Belongs to the RNase H family. Monomer. Requires Mg(2+) as cofactor.

The protein localises to the cytoplasm. The enzyme catalyses Endonucleolytic cleavage to 5'-phosphomonoester.. Endonuclease that specifically degrades the RNA of RNA-DNA hybrids. This Pseudomonas fluorescens (strain Pf0-1) protein is Ribonuclease H.